A 1060-amino-acid chain; its full sequence is DNA topoisomerase 1 (1060 aa).

A Toprim domain is found at 1–141 (MILVIAEKPN…KRMKFSALTK (141 aa)). Residues Glu-7 and Asp-107 each coordinate Mg(2+). The region spanning 156 to 947 (NFGMANAGIA…EAKIRLTKIL (792 aa)) is the Topo IA-type catalytic domain. Residues 196–201 (STGRVQ) form an interaction with DNA region. The DOD-type homing endonuclease domain maps to 482–591 (LIGYLAGKGG…IKVYLQLLGI (110 aa)). Tyr-690 acts as the O-(5'-phospho-DNA)-tyrosine intermediate in catalysis. Residues 978–1006 (CPKCGGDLIVKYNEKTGKRFVGCSNWPKC) form a C4-type 1 zinc finger. Residues 1025–1050 (CCNGAPVVIIREKDGREWEICLDMNC) form a C4-type 2; atypical zinc finger.

The protein belongs to the type IA topoisomerase family. In terms of assembly, monomer. Mg(2+) is required as a cofactor. This protein undergoes a protein self splicing that involves a post-translational excision of the intervening region (intein) followed by peptide ligation.

The catalysed reaction is ATP-independent breakage of single-stranded DNA, followed by passage and rejoining.. In terms of biological role, releases the supercoiling and torsional tension of DNA, which is introduced during the DNA replication and transcription, by transiently cleaving and rejoining one strand of the DNA duplex. Introduces a single-strand break via transesterification at a target site in duplex DNA. The scissile phosphodiester is attacked by the catalytic tyrosine of the enzyme, resulting in the formation of a DNA-(5'-phosphotyrosyl)-enzyme intermediate and the expulsion of a 3'-OH DNA strand. The free DNA strand then undergoes passage around the unbroken strand, thus removing DNA supercoils. Finally, in the religation step, the DNA 3'-OH attacks the covalent intermediate to expel the active-site tyrosine and restore the DNA phosphodiester backbone. The polypeptide is DNA topoisomerase 1 (topA) (Pyrococcus furiosus (strain ATCC 43587 / DSM 3638 / JCM 8422 / Vc1)).